The sequence spans 173 residues: Large ribosomal subunit protein uL16 (173 aa).

It belongs to the universal ribosomal protein uL16 family.

This Methanococcus aeolicus (strain ATCC BAA-1280 / DSM 17508 / OCM 812 / Nankai-3) protein is Large ribosomal subunit protein uL16.